The chain runs to 898 residues: Alanine--tRNA ligase (898 aa).

Positions 584, 588, 686, and 690 each coordinate Zn(2+).

Belongs to the class-II aminoacyl-tRNA synthetase family. Zn(2+) is required as a cofactor.

The protein resides in the cytoplasm. The enzyme catalyses tRNA(Ala) + L-alanine + ATP = L-alanyl-tRNA(Ala) + AMP + diphosphate. Its function is as follows. Catalyzes the attachment of alanine to tRNA(Ala) in a two-step reaction: alanine is first activated by ATP to form Ala-AMP and then transferred to the acceptor end of tRNA(Ala). Also edits incorrectly charged Ser-tRNA(Ala) and Gly-tRNA(Ala) via its editing domain. In Myxococcus xanthus (strain DK1622), this protein is Alanine--tRNA ligase.